A 378-amino-acid polypeptide reads, in one-letter code: 1-acyl-sn-glycerol-3-phosphate acyltransferase delta (378 aa).

The chain crosses the membrane as a helical span at residues 11–31; that stretch reads FLCHLVFCYVFIASGLIINTI. An HXXXXD motif motif is present at residues 96–101; the sequence is HKFEID. Helical transmembrane passes span 125-145, 307-327, and 338-358; these read ELAYVPIIGWMWYFTEMVFCS, TLVNWLFWASLVLYPFFQFLV, and LASFILVFFVASVGVRWMIGV.

This sequence belongs to the 1-acyl-sn-glycerol-3-phosphate acyltransferase family. As to expression, widely expressed with highest levels in skeletal muscle, followed by heart, liver, prostate and thymus.

Its subcellular location is the endoplasmic reticulum membrane. It carries out the reaction a 1-acyl-sn-glycero-3-phosphate + an acyl-CoA = a 1,2-diacyl-sn-glycero-3-phosphate + CoA. It catalyses the reaction (4Z,7Z,10Z,13Z,16Z,19Z)-docosahexaenoyl-CoA + 1-hexadecanoyl-sn-glycero-3-phosphate = 1-hexadecanoyl-2-(4Z,7Z,10Z,13Z,16Z,19Z-docosahexaenoyl)-sn-glycero-3-phosphate + CoA. The enzyme catalyses 1-octadecanoyl-sn-glycero-3-phosphate + (9Z,12Z)-octadecadienoyl-CoA = 1-octadecanoyl-2-(9Z,12Z-octadecadienoyl)-sn-glycero-3-phosphate + CoA. The catalysed reaction is 1-octadecanoyl-sn-glycero-3-phosphate + (4Z,7Z,10Z,13Z,16Z,19Z)-docosahexaenoyl-CoA = 1-octadecanoyl-2-(4Z,7Z,10Z,13Z,16Z,19Z-docosahexaenoyl)-sn-glycero-3-phosphate + CoA. It carries out the reaction (4Z,7Z,10Z,13Z,16Z,19Z)-docosahexaenoyl-CoA + 1-(9Z-octadecenoyl)-sn-glycero-3-phosphate = 1-(9Z-octadecenoyl)-2-(4Z,7Z,10Z,13Z,16Z,19Z-docosahexaenoyl)-sn-glycero-3-phosphate + CoA. The protein operates within phospholipid metabolism; CDP-diacylglycerol biosynthesis; CDP-diacylglycerol from sn-glycerol 3-phosphate: step 2/3. Converts 1-acyl-sn-glycerol-3-phosphate (lysophosphatidic acid or LPA) into 1,2-diacyl-sn-glycerol-3-phosphate (phosphatidic acid or PA) by incorporating an acyl moiety at the sn-2 position of the glycerol backbone. Exhibits high acyl-CoA specificity for polyunsaturated fatty acyl-CoA, especially docosahexaenoyl-CoA (22:6-CoA, DHA-CoA). In Homo sapiens (Human), this protein is 1-acyl-sn-glycerol-3-phosphate acyltransferase delta (AGPAT4).